Here is a 602-residue protein sequence, read N- to C-terminus: Fructan 1-exohydrolase (602 aa).

Residues 1–19 (MAQAWAFLLLPVLLLSSYA) form the signal peptide. Asp81 is a catalytic residue. Residues Asn174, Asn242, and Asn254 are each glycosylated (N-linked (GlcNAc...) asparagine). An intrachain disulfide couples Cys452 to Cys498.

It belongs to the glycosyl hydrolase 32 family. Detected in leaves, with maximum levels at the leaf tip.

The catalysed reaction is Hydrolysis of terminal, non-reducing (2-&gt;1)-linked beta-D-fructofuranose residues in fructans.. Its activity is regulated as follows. Inhibited by sucrose. Its function is as follows. Hydrolyzes inulin-type beta-(2,1)-fructans. Has low activity against beta-(2,6)-linked fructans. May play a role as a beta-(2,1)-trimmer during graminan biosynthesis. The protein is Fructan 1-exohydrolase of Bromus pictus (Patagonian grass).